The primary structure comprises 170 residues: Protein SprT (170 aa).

The SprT-like domain occupies 25 to 165 (SEQFFDRTFA…QYCKGRLEPV (141 aa)). Histidine 78 serves as a coordination point for Zn(2+). Glutamate 79 is a catalytic residue. Histidine 82 serves as a coordination point for Zn(2+).

The protein belongs to the SprT family. Zn(2+) is required as a cofactor.

The protein localises to the cytoplasm. This is Protein SprT from Actinobacillus succinogenes (strain ATCC 55618 / DSM 22257 / CCUG 43843 / 130Z).